The chain runs to 1042 residues: MPGNVVSPKVLMDLIPKLKISMQETDKNEVIKNSEQHSSVSWDPDTCENLYITLEEQIESKDTLAREQALKALLLTLDATNKRVEPYLVRLLPRVLKQVGLEKVAAVRTQASTVAEDIIKTMNPYAVKTILSHVTNSIKTSGKWMEKMCAFRLLDMLVEKAPCQMSYRLPELIPILSESMWDTRTDIKNQARKTMTSVCTLISNPDIDKFIPVLIDCIAQPEKVPETIHTLGATTFVQEVHASTLSIMVPLLYRGLNERETTIKRKSAVIIDNMCKLVEDPYIIAPFLPKLIPTLEHIKETIGDPECRSVVNRSLATLIRVGNVKEGKIPEVLNIAKPENCMETLLSILKGQELVPVSDVYLNYISCIASQLIDEKNNEVVDWDVNISPYLQPIILKADINCIIDQFRKRSISGFHSSSAESEEEEGEDLCNCEFSLAYGAKILLNRTSLNLKRGYRYGLCGPNGSGKSTLLRSIFNGQLEGFPTELKTAYVEHDIDDTESKTSVFDFIANDPSVVVKNKQEVISSLLEHSFTEDMLSIPISNLSGGWKMKLALVRAMLRQVDILLLDEPTNHLDVKNVAWLENFLTSQTHITSIIVSHDSKFLDNVVQAIIHYEHFKLKKYMGNMSKFITLVPSARSYQDISMSEIEFSFPEPGYLEGVKTKQRAICRMRDIEFQYEGTSEPQIKNVSLQVSLSSRIAVIGPNGAGKSTLIKVLCGELIPQKGEVWCHPNLRIAYVAQAAFVHLGSHENKTPSEYIQWRYRTAEDSETIDRASRQLTENDEHLMNKIFKINGTSRKIQGIHSRRKLKNSYEYECSFLVGENVGEKNERWVPLPSMNNEWLPRGELIESHSKMVAEVDMKEALKSGSFRPLVRKEIEKHCESFGLDAEIVTHSRIKGLSGGQKVKLVLAAGSWLKPHVIVLDEPTNYLDRDSLGALSKALKSFEGGVVIITHSVEFTKNLTEEVWSVQNGQMTPSGHNWVQGQGTGPRLQEQEEEDTFDALGNKIEAKKKAKKLTSSELRKKKKERMARRKKGEEVFSDEDD.

HEAT repeat units follow at residues 9 to 46, 86 to 124, 167 to 204, 206 to 242, 243 to 280, and 289 to 327; these read KVLMDLIPKLKISMQETDKNEVIKNSEQHSSVSWDPDT, PYLVRLLPRVLKQVGLEKVAAVRTQASTVAEDIIKTMNP, YRLPELIPILSESMWDTRTDIKNQARKTMTSVCTLISN, DIDKFIPVLIDCIAQPEKVPETIHTLGATTFVQEVHA, STLSIMVPLLYRGLNERETTIKRKSAVIIDNMCKLVED, and PKLIPTLEHIKETIGDPECRSVVNRSLATLIRVGNVKEG. 2 ABC transporter domains span residues 425–642 and 668–994; these read EEGE…YQDI and CRMR…EQEE. Positions 704, 923, 926, and 952 each coordinate ADP. Residues 1009-1042 are disordered; the sequence is KKAKKLTSSELRKKKKERMARRKKGEEVFSDEDD. The segment covering 1020–1031 has biased composition (basic residues); that stretch reads RKKKKERMARRK.

Belongs to the ABC transporter superfamily. ABCF family. EF3 subfamily. Monomer.

Its subcellular location is the cytoplasm. It carries out the reaction ATP + H2O = ADP + phosphate + H(+). It participates in protein biosynthesis; polypeptide chain elongation. Functionally, ribosome-dependent ATPase that functions in cytoplasmic translation elongation. Required for the ATP-dependent release of deacylated tRNA from the ribosomal E-site during protein biosynthesis. Stimulates the eEF1A-dependent binding of aminoacyl-tRNA to the ribosomal A-site, which has reduced affinity for tRNA as long as the E-site is occupied. Assists translation termination by stimulating the release of nascent protein from the ribosome by release factors. The sequence is that of Elongation factor 3 (TEF3) from Pneumocystis carinii.